Here is a 344-residue protein sequence, read N- to C-terminus: Tripartite motif-containing protein 44 (344 aa).

Residues 69–165 (PPASGDDALP…ETEAESEFDP (97 aa)) form a disordered region. Over residues 88–165 (EGEVESEVGE…ETEAESEFDP (78 aa)) the composition is skewed to acidic residues. Residues 174–215 (VAKRKCPDHGLDLSTYCQEDRQLICVLCPVIGAHRGHQLSTL) form a B box-type zinc finger. Residues Cys179, His182, Cys201, and His207 each contribute to the Zn(2+) site. Residues 290–325 (AHVTEILADIQSHMDRLMTQMAQAKEQLDTSNESAE) are a coiled coil. Residues 309–344 (QMAQAKEQLDTSNESAEPKAEGDEEGPSGASEEEDT) form a disordered region. The span at 330–344 (GDEEGPSGASEEEDT) shows a compositional bias: acidic residues. 2 positions are modified to phosphoserine: Ser336 and Ser339.

In terms of assembly, interacts (via coiled coil) with TRIM17 (via coiled coil).

Functionally, may play a role in the process of differentiation and maturation of neuronal cells. May regulate the activity of TRIM17. Is a negative regulator of PAX6 expression. This Rattus norvegicus (Rat) protein is Tripartite motif-containing protein 44 (Trim44).